A 62-amino-acid polypeptide reads, in one-letter code: Large ribosomal subunit protein bL28 (62 aa).

The protein belongs to the bacterial ribosomal protein bL28 family.

The protein is Large ribosomal subunit protein bL28 of Koribacter versatilis (strain Ellin345).